We begin with the raw amino-acid sequence, 314 residues long: Protein REGULATOR OF FATTY ACID COMPOSITION 3, chloroplastic (314 aa).

A chloroplast-targeting transit peptide spans Met-1–Val-47. Disordered stretches follow at residues Ala-49–Pro-73 and Ala-214–Gly-314. Residues Lys-56–Glu-69 show a composition bias toward basic and acidic residues. 2 stretches are compositionally biased toward acidic residues: residues Glu-233 to Gly-269 and Gly-277 to Glu-294. The segment covering Gly-295–Arg-308 has biased composition (basic and acidic residues).

This sequence belongs to the bacterial ribosomal protein bS6 family. In terms of assembly, interacts with CFM3B/SPRT2 in plastids. Expressed ubiquitously in roots, leaves, stems, flower buds, flowers and siliques.

The protein resides in the plastid. Its subcellular location is the chloroplast. Its function is as follows. Prevents non-specific action of the splicing factor CFM3b during plastid rRNA biogenesis to improve the accuracy of plastid rRNA processing. Required for plastid functions such as photosynthesis, intracellular distribution, plastid rRNAs biosynthesis and plastid gene expression in roots. Involved in a sucrose-conditional process important for the organization of root lateral and apical meristems (e.g. establishment of RAM from pericycle and symplasmic connectivity), and subsequent primary and lateral roots development. Modulates C18 unsaturated fatty acid metabolism. The chain is Protein REGULATOR OF FATTY ACID COMPOSITION 3, chloroplastic from Arabidopsis thaliana (Mouse-ear cress).